The sequence spans 414 residues: 2,3-diketo-5-methylthiopentyl-1-phosphate enolase (414 aa).

K99 serves as the catalytic Proton acceptor. Residues K148, 174-177 (KDDE), H265, G338, and 360-361 (GG) each bind substrate. K174, D176, and E177 together coordinate Mg(2+). The residue at position 174 (K174) is an N6-carboxylysine.

The protein belongs to the RuBisCO large chain family. Type IV subfamily. As to quaternary structure, homodimer. Mg(2+) is required as a cofactor.

The catalysed reaction is 5-methylsulfanyl-2,3-dioxopentyl phosphate = 2-hydroxy-5-methylsulfanyl-3-oxopent-1-enyl phosphate. The protein operates within amino-acid biosynthesis; L-methionine biosynthesis via salvage pathway; L-methionine from S-methyl-5-thio-alpha-D-ribose 1-phosphate: step 3/6. Functionally, catalyzes the enolization of 2,3-diketo-5-methylthiopentyl-1-phosphate (DK-MTP-1-P) into 2-hydroxy-3-keto-5-methylthiopentenyl-1-phosphate (HK-MTPenyl-1-P). This chain is 2,3-diketo-5-methylthiopentyl-1-phosphate enolase, found in Bacillus cereus (strain ATCC 10987 / NRS 248).